The primary structure comprises 143 residues: Transcriptional regulator SlyA (143 aa).

One can recognise an HTH marR-type domain in the interval 2-135 (ESTLGSDLAR…LSTLVQKLEQ (134 aa)). Positions 49-72 (QIQLAKAIGIEQPSLVRTLDQLEE) form a DNA-binding region, H-T-H motif.

It belongs to the SlyA family. As to quaternary structure, homodimer.

In terms of biological role, transcription regulator that can specifically activate or repress expression of target genes. Regulates the cpm operon, which contains cpmA, cpmB, cpmC, cpmD, cpmE, cpmF, cpmG and cpmH, involved in carbapenem-like antibiotic production. The protein is Transcriptional regulator SlyA of Photorhabdus laumondii subsp. laumondii (strain DSM 15139 / CIP 105565 / TT01) (Photorhabdus luminescens subsp. laumondii).